The primary structure comprises 831 residues: MKQDLISSVQIILFLPLTTVGLAGQSFPGKPKIIRCRSLEKETFSCWWKPGSDGGLPTNYTLFYSKDSEEEIYECPDYRTSGPNSCYFNKNHTSPWTTFNITVTATNEIGSNSSDPQYVDVTSIVQPGSPVNLTLETKRSANIMYLWAKWSPPLLADASSNHLYHYELRIKPEEKEEWETISVGVQTQCKINRLNAGMRYVVQVRCTLDPGEWSEWSSERHILIPSGQSPPEKPTIIKCRSPEKETFTCWWKPGLDGGHPTNYTLLYSKEGEEQVYECPDYRTAGPNSCYFDKKHTSFWTIYNITVRATNEMGSNSSDPHYVDVTYIVQPDPPVNVTLELKKPINRKPYLVLTWSPPPLADVRSGWLTLEYELRLKPEEGEEWETIFVGQQTQYKMFSLNPGKKYIIQIHCKPDHHGSWSEWSSENYIQIPNDFRVKDMIVWIVLGVLSSLICLIMSWTMVLKGYRMITFMLPPVPGPKIKGIDTHLLETGKSEELLSALGCHGLPPTSDCEELLIEYLEVEDSEDQQLMPSHDNGHPSKNAKITRKETDSDSGRGSCDSPSLLSEKCRETCALPPVLQTQEVRDVQEKKAAKRSWETQYVASERKALLSNSESAKSSTWPAVQLPNSQPPMFAYHSIVDAHKITLNTTNTNVAAVLVEDEEEHQSQCSLTETIPGEMEKQGEMENLHSKTEQTTAQVKQNRSNERLPFLDAALMDYVEVHKVIRQDEEPAVLLKHKENSGKIEKYTISGASKEYTKVSTVMDHNILVLMPDSRVPHTPASQEPAKETSQSLQQGQVEKNMSYCLTAPSDCKRETGGSEYMDPSSFMPSFK.

Residues 1-23 form the signal peptide; sequence MKQDLISSVQIILFLPLTTVGLA. Over 24-438 the chain is Extracellular; the sequence is GQSFPGKPKI…QIPNDFRVKD (415 aa). Fibronectin type-III domains are found at residues 30 to 128, 129 to 227, 230 to 331, and 332 to 433; these read KPKI…VQPG, SPVN…IPSG, PPEK…VQPD, and PPVN…IPND. An intrachain disulfide couples Cys-36 to Cys-46. The N-linked (GlcNAc...) asparagine glycan is linked to Asn-59. Cys-75 and Cys-86 are joined by a disulfide. 8 N-linked (GlcNAc...) asparagine glycosylation sites follow: Asn-91, Asn-100, Asn-112, Asn-132, Asn-262, Asn-303, Asn-315, and Asn-335. Positions 414 and 416 each coordinate Zn(2+). Residues 419 to 423 carry the WSXWS motif motif; that stretch reads WSEWS. A helical transmembrane segment spans residues 439 to 459; it reads MIVWIVLGVLSSLICLIMSWT. The Cytoplasmic portion of the chain corresponds to 460-831; the sequence is MVLKGYRMIT…DPSSFMPSFK (372 aa). The short motif at 471–479 is the Box 1 motif element; that stretch reads MLPPVPGPK. 3 disordered regions span residues 527–563, 774–796, and 808–831; these read QQLMPSHDNGHPSKNAKITRKETDSDSGRGSCDSPSL, RVPHTPASQEPAKETSQSLQQGQ, and PSDCKRETGGSEYMDPSSFMPSFK. Residues 787–796 show a composition bias toward polar residues; sequence ETSQSLQQGQ.

It belongs to the type I cytokine receptor family. Type 1 subfamily.

The protein resides in the membrane. Functionally, this is a receptor for the anterior pituitary hormone prolactin. This is Prolactin receptor (PRLR) from Gallus gallus (Chicken).